A 169-amino-acid chain; its full sequence is Der GTPase-activating protein YihI (169 aa).

Disordered stretches follow at residues 1–98 (MKPS…PQAE) and 144–169 (GLSY…LRGN). Residues 10–19 (SKGHAKARRK) are compositionally biased toward basic residues. The span at 20 to 30 (TREELDQEARD) shows a compositional bias: basic and acidic residues. The span at 31-40 (RKRLKKRRGH) shows a compositional bias: basic residues. The span at 49-58 (GNTTSGSKGQ) shows a compositional bias: polar residues. Residues 147-159 (YDDDEEEEEDEKQ) show a composition bias toward acidic residues. The segment covering 160–169 (EDMMRLLRGN) has biased composition (basic and acidic residues).

It belongs to the YihI family. As to quaternary structure, interacts with Der.

Functionally, a GTPase-activating protein (GAP) that modifies Der/EngA GTPase function. May play a role in ribosome biogenesis. The sequence is that of Der GTPase-activating protein YihI from Escherichia coli O6:K15:H31 (strain 536 / UPEC).